A 171-amino-acid polypeptide reads, in one-letter code: Large ribosomal subunit protein uL10 (171 aa).

The protein belongs to the universal ribosomal protein uL10 family. Part of the ribosomal stalk of the 50S ribosomal subunit. The N-terminus interacts with L11 and the large rRNA to form the base of the stalk. The C-terminus forms an elongated spine to which L12 dimers bind in a sequential fashion forming a multimeric L10(L12)X complex.

Functionally, forms part of the ribosomal stalk, playing a central role in the interaction of the ribosome with GTP-bound translation factors. In Phenylobacterium zucineum (strain HLK1), this protein is Large ribosomal subunit protein uL10.